The sequence spans 87 residues: Small ribosomal subunit protein bS18 (87 aa).

This sequence belongs to the bacterial ribosomal protein bS18 family. As to quaternary structure, part of the 30S ribosomal subunit. Forms a tight heterodimer with protein bS6.

Its function is as follows. Binds as a heterodimer with protein bS6 to the central domain of the 16S rRNA, where it helps stabilize the platform of the 30S subunit. The protein is Small ribosomal subunit protein bS18 of Sulfurimonas denitrificans (strain ATCC 33889 / DSM 1251) (Thiomicrospira denitrificans (strain ATCC 33889 / DSM 1251)).